The chain runs to 327 residues: 2-phosphoglycerate kinase (327 aa).

Residues 1 to 20 are compositionally biased toward basic and acidic residues; that stretch reads MSEKSSRKERDEKTEKETAR. The tract at residues 1–27 is disordered; it reads MSEKSSRKERDEKTEKETARQGKHRRI. The ATP-cone domain maps to 25-111; it reads RRIRVKSRHY…LWRRIKKREE (87 aa).

This sequence belongs to the 2-phosphoglycerate kinase family. A divalent metal cation serves as cofactor.

It carries out the reaction (2R)-2-phosphoglycerate + ATP = (2R)-2,3-bisphosphoglycerate + ADP + H(+). It participates in thermoadapter biosynthesis; cyclic 2,3-diphosphoglycerate biosynthesis; cyclic 2,3-diphosphoglycerate from 2-phospho-D-glycerate: step 1/2. In terms of biological role, catalyzes the phosphorylation of 2-phosphoglycerate to 2,3-diphosphoglycerate. Involved in the biosynthesis of cyclic 2,3-bisphosphoglycerate, a thermoprotectant. The protein is 2-phosphoglycerate kinase of Methanopyrus kandleri (strain AV19 / DSM 6324 / JCM 9639 / NBRC 100938).